Reading from the N-terminus, the 555-residue chain is Methyl-coenzyme M reductase subunit alpha (555 aa).

Gln152 is a binding site for coenzyme F430. Coenzyme B is bound by residues Arg230, 261–262 (KH), and Arg275. Positions 337 and 448 each coordinate coenzyme M.

It belongs to the methyl-coenzyme M reductase alpha subunit family. In terms of assembly, MCR is a hexamer of two alpha, two beta, and two gamma chains, forming a dimer of heterotrimers. The cofactor is coenzyme F430.

It is found in the cytoplasm. It catalyses the reaction coenzyme B + methyl-coenzyme M = methane + coenzyme M-coenzyme B heterodisulfide. Its pathway is one-carbon metabolism; methyl-coenzyme M reduction; methane from methyl-coenzyme M: step 1/1. Component of the methyl-coenzyme M reductase (MCR) I that catalyzes the reductive cleavage of methyl-coenzyme M (CoM-S-CH3 or 2-(methylthio)ethanesulfonate) using coenzyme B (CoB or 7-mercaptoheptanoylthreonine phosphate) as reductant which results in the production of methane and the mixed heterodisulfide of CoB and CoM (CoM-S-S-CoB). This is the final step in methanogenesis. In Methanococcus voltae, this protein is Methyl-coenzyme M reductase subunit alpha (mcrA).